Reading from the N-terminus, the 810-residue chain is Volume-regulated anion channel subunit LRRC8A (810 aa).

The residue at position 1 (Met-1) is an N-acetylmethionine. Topologically, residues 1-22 are cytoplasmic; that stretch reads MIPVTELRYFADTQPAYRILKP. A helical transmembrane segment spans residues 23-47; sequence WWDVFTDYISIVMLMIAVFGGTLQV. Topologically, residues 48 to 123 are extracellular; that stretch reads TQDKMICLPC…YENRLHWFAK (76 aa). 3 cysteine pairs are disulfide-bonded: Cys-54–Cys-310, Cys-57–Cys-65, and Cys-113–Cys-295. N-linked (GlcNAc...) asparagine glycosylation is found at Asn-66 and Asn-83. A helical membrane pass occupies residues 124–142; it reads YFPYLVLLHTLIFLACSNF. The Cytoplasmic segment spans residues 143 to 264; it reads WFKFPRTSSK…EEGDIVYRLY (122 aa). Thr-200 is modified (phosphothreonine). The residue at position 202 (Ser-202) is a Phosphoserine. At Thr-215 the chain carries Phosphothreonine. Ser-217 is modified (phosphoserine). Residues 265–286 traverse the membrane as a helical segment; that stretch reads MRQTIIKVIKFFLIICYTVYYV. Over 287-316 the chain is Extracellular; the sequence is HNIKFDVDCTVDIESLTGYRTYRCAHPLAT. Residues 317–341 traverse the membrane as a helical segment; sequence LFKILASFYISLVIFYGLICMYTLW. Residues 342–810 are Cytoplasmic-facing; the sequence is WMLRRSLKKY…RLWRADKEQA (469 aa). 17 LRR repeats span residues 399–422, 423–445, 447–468, 469–492, 493–515, 518–542, 543–565, 567–589, 590–613, 614–637, 639–661, 662–684, 686–707, 708–730, 732–753, 754–776, and 778–801; these read ENKL…RLTK, NAQD…VFDL, ELEV…IAQL, TGLK…AFLR, ENLR…IYSL, LEEL…GLRE, LKRL…VTDV, VHLQ…SLKK, MVNL…IFSL, HNLQ…SFQH, HRLT…IGNL, TNLE…LFYC, KLRY…IGLL, QNLQ…LFQC, KLRA…VGEL, TNLT…LGEC, and LLKR…VKER. The Di-leucine motif signature appears at 706-707; sequence LL.

The protein belongs to the LRRC8 family. In terms of assembly, heterohexamer; oligomerizes with other LRRC8 proteins (LRRC8B, LRRC8C, LRRC8D and/or LRRC8E) to form a heterohexamer. Can form homohexamers in vitro, but these have lower conductance than heterohexamers. Detected in a channel complex that contains LRRC8A, LRRC8C and LRRC8E. In vivo, the subunit composition may depend primarily on expression levels, and heterooligomeric channels containing various proportions of the different LRRC8 proteins may coexist. Interact with GRB2. Interacts with NOX4; this interaction prevents the ubiquitin-mediated degradation of LRRC8A. N-glycosylated.

Its subcellular location is the cell membrane. It is found in the lysosome membrane. The catalysed reaction is chloride(in) = chloride(out). It carries out the reaction iodide(out) = iodide(in). It catalyses the reaction taurine(out) = taurine(in). The enzyme catalyses L-aspartate(out) = L-aspartate(in). The catalysed reaction is L-glutamate(out) = L-glutamate(in). It carries out the reaction myo-inositol(out) = myo-inositol(in). It catalyses the reaction 2',3'-cGAMP(out) = 2',3'-cGAMP(in). Inhibited by (4-[(2-butyl-6,7-dichloro-2-cyclopentyl-2,3-dihydro-1-oxo-1H-inden-5-yl)oxy]butanoic acid), which plugs the channel like a cork in a bottle by binding in the extracellular selectivity filter and sterically occluding ion conduction. Lipids may block conduction in closed heterohexameric channels. Essential component of the volume-regulated anion channel (VRAC, also named VSOAC channel), an anion channel required to maintain a constant cell volume in response to extracellular or intracellular osmotic changes. The VRAC channel conducts iodide better than chloride and can also conduct organic osmolytes like taurine. Mediates efflux of amino acids, such as aspartate and glutamate, in response to osmotic stress. In complex with LRRC8C or LRRC8E, acts as a transporter of immunoreactive cyclic dinucleotide GMP-AMP (2'-3'-cGAMP), an immune messenger produced in response to DNA virus in the cytosol: mediates both import and export of 2'-3'-cGAMP, thereby promoting transfer of 2'-3'-cGAMP to bystander cells. In contrast, complexes containing LRRC8D inhibit transport of 2'-3'-cGAMP. Required for in vivo channel activity, together with at least one other family member (LRRC8B, LRRC8C, LRRC8D or LRRC8E); channel characteristics depend on the precise subunit composition. Can form functional channels by itself (in vitro). Involved in B-cell development: required for the pro-B cell to pre-B cell transition. Also required for T-cell development. Required for myoblast differentiation: VRAC activity promotes membrane hyperpolarization and regulates insulin-stimulated glucose metabolism and oxygen consumption. Also acts as a regulator of glucose-sensing in pancreatic beta cells: VRAC currents, generated in response to hypotonicity- or glucose-induced beta cell swelling, depolarize cells, thereby causing electrical excitation, leading to increase glucose sensitivity and insulin secretion. Also plays a role in lysosome homeostasis by forming functional lysosomal VRAC channels in response to low cytoplasmic ionic strength condition: lysosomal VRAC channels are necessary for the formation of large lysosome-derived vacuoles, which store and then expel excess water to maintain cytosolic water homeostasis. Acts as a key factor in NLRP3 inflammasome activation by modulating itaconate efflux and mitochondria function. This chain is Volume-regulated anion channel subunit LRRC8A, found in Rattus norvegicus (Rat).